A 372-amino-acid chain; its full sequence is Chaperone protein DnaJ (372 aa).

In terms of domain architecture, J spans 5–69 (DYYEVLGVDR…QKKARYDQFG (65 aa)). The CR-type zinc finger occupies 129–211 (GKETEIEIPR…CSGKGKVRKR (83 aa)). Zn(2+)-binding residues include C142, C145, C159, C162, C185, C188, C199, and C202. CXXCXGXG motif repeat units follow at residues 142-149 (CGTCHGSG), 159-166 (CSHCGGSG), 185-192 (CNYCEGTG), and 199-206 (CATCSGKG).

Belongs to the DnaJ family. In terms of assembly, homodimer. Requires Zn(2+) as cofactor.

Its subcellular location is the cytoplasm. In terms of biological role, participates actively in the response to hyperosmotic and heat shock by preventing the aggregation of stress-denatured proteins and by disaggregating proteins, also in an autonomous, DnaK-independent fashion. Unfolded proteins bind initially to DnaJ; upon interaction with the DnaJ-bound protein, DnaK hydrolyzes its bound ATP, resulting in the formation of a stable complex. GrpE releases ADP from DnaK; ATP binding to DnaK triggers the release of the substrate protein, thus completing the reaction cycle. Several rounds of ATP-dependent interactions between DnaJ, DnaK and GrpE are required for fully efficient folding. Also involved, together with DnaK and GrpE, in the DNA replication of plasmids through activation of initiation proteins. The chain is Chaperone protein DnaJ from Shouchella clausii (strain KSM-K16) (Alkalihalobacillus clausii).